The sequence spans 424 residues: Light-independent protochlorophyllide reductase subunit N (424 aa).

The [4Fe-4S] cluster site is built by Cys16, Cys41, and Cys102.

Belongs to the BchN/ChlN family. In terms of assembly, protochlorophyllide reductase is composed of three subunits; ChlL, ChlN and ChlB. Forms a heterotetramer of two ChlB and two ChlN subunits. Requires [4Fe-4S] cluster as cofactor.

The enzyme catalyses chlorophyllide a + oxidized 2[4Fe-4S]-[ferredoxin] + 2 ADP + 2 phosphate = protochlorophyllide a + reduced 2[4Fe-4S]-[ferredoxin] + 2 ATP + 2 H2O. It functions in the pathway porphyrin-containing compound metabolism; chlorophyll biosynthesis (light-independent). Component of the dark-operative protochlorophyllide reductase (DPOR) that uses Mg-ATP and reduced ferredoxin to reduce ring D of protochlorophyllide (Pchlide) to form chlorophyllide a (Chlide). This reaction is light-independent. The NB-protein (ChlN-ChlB) is the catalytic component of the complex. This is Light-independent protochlorophyllide reductase subunit N from Synechococcus sp. (strain WH7803).